The chain runs to 141 residues: Phosphoribosyl-AMP cyclohydrolase (141 aa).

Asp91 is a binding site for Mg(2+). Zn(2+) is bound at residue Cys92. Mg(2+) is bound by residues Asp93 and Asp95. Residues Cys110 and Cys117 each contribute to the Zn(2+) site.

The protein belongs to the PRA-CH family. Homodimer. Mg(2+) serves as cofactor. Requires Zn(2+) as cofactor.

The protein resides in the cytoplasm. The enzyme catalyses 1-(5-phospho-beta-D-ribosyl)-5'-AMP + H2O = 1-(5-phospho-beta-D-ribosyl)-5-[(5-phospho-beta-D-ribosylamino)methylideneamino]imidazole-4-carboxamide. It functions in the pathway amino-acid biosynthesis; L-histidine biosynthesis; L-histidine from 5-phospho-alpha-D-ribose 1-diphosphate: step 3/9. Catalyzes the hydrolysis of the adenine ring of phosphoribosyl-AMP. This Brucella anthropi (strain ATCC 49188 / DSM 6882 / CCUG 24695 / JCM 21032 / LMG 3331 / NBRC 15819 / NCTC 12168 / Alc 37) (Ochrobactrum anthropi) protein is Phosphoribosyl-AMP cyclohydrolase.